We begin with the raw amino-acid sequence, 681 residues long: Methionine--tRNA ligase (681 aa).

A 'HIGH' region motif is present at residues 14-24; that stretch reads PYANGSIHLGH. Residues Cys-145, Cys-148, Cys-158, and Cys-161 each contribute to the Zn(2+) site. The 'KMSKS' region motif lies at 331–335; the sequence is KMSKS. Residue Lys-334 coordinates ATP. The tRNA-binding domain maps to 579–681; sequence AFAAIDLRVA…SGAKPGQRIK (103 aa).

It belongs to the class-I aminoacyl-tRNA synthetase family. MetG type 1 subfamily. Homodimer. Zn(2+) is required as a cofactor.

The protein localises to the cytoplasm. It catalyses the reaction tRNA(Met) + L-methionine + ATP = L-methionyl-tRNA(Met) + AMP + diphosphate. Its function is as follows. Is required not only for elongation of protein synthesis but also for the initiation of all mRNA translation through initiator tRNA(fMet) aminoacylation. In Pseudomonas fluorescens (strain ATCC BAA-477 / NRRL B-23932 / Pf-5), this protein is Methionine--tRNA ligase.